The chain runs to 125 residues: Cystatin-like cysteine protease inhibitor EPIC2A (125 aa).

The first 21 residues, 1-21, serve as a signal peptide directing secretion; that stretch reads MSFLRPTLALLAVTALVTTSA. Asn45 carries N-linked (GlcNAc...) asparagine glycosylation. A Secondary area of contact motif is present at residues 68 to 72; the sequence is QVVSG.

This sequence belongs to the cystatin family.

It is found in the secreted. Its function is as follows. Secreted effector that interacts with and inhibits host apoplastic pathogenesis-related papain-like cysteine proteases. Inhibition of host proteases by a pathogen extracellular protease inhibitor forms a specific type of defense-counterdefense mechanism between plants and microbial pathogens. This chain is Cystatin-like cysteine protease inhibitor EPIC2A, found in Phytophthora infestans (strain T30-4) (Potato late blight agent).